We begin with the raw amino-acid sequence, 111 residues long: Cell cycle protein GpsB (111 aa).

Residues 32–63 (LDDIMKDYDAYEAIIKELKGEIARLKAQAANS) are a coiled coil. Residues 59-80 (QAANSPKTTLPTEESNDVLRTE) are disordered. Polar residues predominate over residues 60-71 (AANSPKTTLPTE).

The protein belongs to the GpsB family. Forms polymers through the coiled coil domains. Interacts with PBP1, MreC and EzrA.

It is found in the cytoplasm. In terms of biological role, divisome component that associates with the complex late in its assembly, after the Z-ring is formed, and is dependent on DivIC and PBP2B for its recruitment to the divisome. Together with EzrA, is a key component of the system that regulates PBP1 localization during cell cycle progression. Its main role could be the removal of PBP1 from the cell pole after pole maturation is completed. Also contributes to the recruitment of PBP1 to the division complex. Not essential for septum formation. This Streptococcus suis (strain 98HAH33) protein is Cell cycle protein GpsB.